Reading from the N-terminus, the 858-residue chain is DNA mismatch repair protein MutS (858 aa).

603 to 610 (GPNMSGKS) contacts ATP.

The protein belongs to the DNA mismatch repair MutS family.

Functionally, this protein is involved in the repair of mismatches in DNA. It is possible that it carries out the mismatch recognition step. This protein has a weak ATPase activity. This is DNA mismatch repair protein MutS from Streptococcus agalactiae serotype Ia (strain ATCC 27591 / A909 / CDC SS700).